Reading from the N-terminus, the 136-residue chain is Protein NrdI (136 aa).

Belongs to the NrdI family.

Probably involved in ribonucleotide reductase function. This chain is Protein NrdI, found in Shigella boydii serotype 4 (strain Sb227).